The chain runs to 128 residues: Large ribosomal subunit protein bL12 (128 aa).

This sequence belongs to the bacterial ribosomal protein bL12 family. As to quaternary structure, homodimer. Part of the ribosomal stalk of the 50S ribosomal subunit. Forms a multimeric L10(L12)X complex, where L10 forms an elongated spine to which 2 to 4 L12 dimers bind in a sequential fashion. Binds GTP-bound translation factors.

Its function is as follows. Forms part of the ribosomal stalk which helps the ribosome interact with GTP-bound translation factors. Is thus essential for accurate translation. The protein is Large ribosomal subunit protein bL12 of Corynebacterium jeikeium (strain K411).